A 591-amino-acid polypeptide reads, in one-letter code: Myelin expression factor 2 (591 aa).

The segment at 1 to 92 is disordered; the sequence is MADADKSEAA…GEKKGPNRNR (92 aa). Basic and acidic residues predominate over residues 22 to 36; sequence EPRRDTHPGEPEKPP. A Glycyl lysine isopeptide (Lys-Gly) (interchain with G-Cter in SUMO2) cross-link involves residue lysine 44. Composition is skewed to basic and acidic residues over residues 45–63 and 74–87; these read MEND…EKST and YSKD…EKKG. RRM domains lie at 91–169 and 224–301; these read NRVF…EDPD and STIF…MDDK. Omega-N-methylarginine is present on residues arginine 397 and arginine 417. Serine 422 carries the post-translational modification Phosphoserine. Residues 514-590 form the RRM 3 domain; the sequence is NQIFVRNLPF…REIDVRLDRN (77 aa).

In terms of assembly, monomer. Highly expressed in the brain.

The protein localises to the nucleus. Its function is as follows. Transcriptional repressor of the myelin basic protein gene (MBP). Binds to the proximal MB1 element 5'-TTGTCC-3' of the MBP promoter. Its binding to MB1 and function are inhibited by PURA. This is Myelin expression factor 2 (Myef2) from Mus musculus (Mouse).